A 684-amino-acid polypeptide reads, in one-letter code: Nuclear transcription factor Y subunit gamma (684 aa).

Disordered regions lie at residues 1–74 (MENQ…NIST), 112–238 (MNSP…SSFQ), 414–487 (HSPQ…TQQL), and 511–650 (QQQQ…KNDE). Low complexity predominate over residues 21 to 49 (SNSHNNHHNNNNNNNYNNNNNNNINNINN). Polar residues predominate over residues 58–74 (KSIQQHSPHSSTPNIST). The span at 142–162 (HQHPSSASSSSSSSSSSLSSS) shows a compositional bias: low complexity. Basic residues predominate over residues 163–176 (SHHHHSNHHHHHPN). Positions 188 to 203 (PSLNDSSSNGNGTPAL) are enriched in polar residues. Over residues 220–238 (TPTSTPNQRFQSNGSSSFQ) the composition is skewed to low complexity. The span at 414-423 (HSPQLQEQSS) shows a compositional bias: polar residues. Residues 424–437 (NNNNNNNNNNNNNN) show a composition bias toward low complexity. 2 stretches are compositionally biased toward polar residues: residues 438–456 (SVSV…SPLS) and 464–477 (SQDY…NNHN). Composition is skewed to low complexity over residues 478–487 (QSSLSQTQQL), 511–522 (QQQQHSQQISQQ), and 529–637 (PSNS…NNNN).

It belongs to the NFYC/HAP5 subunit family. As to quaternary structure, heterotrimeric transcription factor composed of three components, NF-YA, NF-YB and NF-YC. NF-YB and NF-YC must interact and dimerize for NF-YA association and DNA binding.

Its subcellular location is the nucleus. Its function is as follows. Stimulates the transcription of various genes by recognizing and binding to a CCAAT motif in promoters. In Dictyostelium discoideum (Social amoeba), this protein is Nuclear transcription factor Y subunit gamma (nfyc-1).